The chain runs to 895 residues: Zyg eleven-related protein 1 (895 aa).

2 disordered regions span residues 58-78 and 195-221; these read HGPA…PDQG and RGQM…SDHQ. Over residues 205-220 the composition is skewed to low complexity; it reads SPLSPSSQPSSIQSDH.

As to quaternary structure, interacts with elc-1. Part of an E3 ubiquitin ligase complex including zer-11, cul-2 and elc-1.

Its function is as follows. Acts as a target recruitment subunit in the E3 ubiquitin ligase complex zer-1-cul-2-elc-1. The protein is Zyg eleven-related protein 1 (zer-1) of Caenorhabditis elegans.